A 58-amino-acid chain; its full sequence is Ribulose bisphosphate carboxylase large chain (58 aa).

A propeptide spanning residues 1–2 (MS) is cleaved from the precursor. Pro3 carries the post-translational modification N-acetylproline. Lys14 carries the post-translational modification N6,N6,N6-trimethyllysine.

Belongs to the RuBisCO large chain family. Type I subfamily. As to quaternary structure, heterohexadecamer of 8 large chains and 8 small chains.

Its subcellular location is the plastid. The protein localises to the chloroplast. It carries out the reaction 2 (2R)-3-phosphoglycerate + 2 H(+) = D-ribulose 1,5-bisphosphate + CO2 + H2O. It catalyses the reaction D-ribulose 1,5-bisphosphate + O2 = 2-phosphoglycolate + (2R)-3-phosphoglycerate + 2 H(+). Its function is as follows. RuBisCO catalyzes two reactions: the carboxylation of D-ribulose 1,5-bisphosphate, the primary event in carbon dioxide fixation, as well as the oxidative fragmentation of the pentose substrate in the photorespiration process. Both reactions occur simultaneously and in competition at the same active site. This Weinmannia silvicola (Towai) protein is Ribulose bisphosphate carboxylase large chain (rbcL).